A 332-amino-acid polypeptide reads, in one-letter code: Glycerol-3-phosphate dehydrogenase [NAD(P)+] (332 aa).

NADPH-binding residues include Ser-15, Trp-16, and Lys-110. Sn-glycerol 3-phosphate-binding residues include Lys-110, Gly-137, and Ser-139. NADPH is bound at residue Ala-141. Lys-192, Asp-245, Ser-255, Arg-256, and Asn-257 together coordinate sn-glycerol 3-phosphate. Lys-192 (proton acceptor) is an active-site residue. Arg-256 is a binding site for NADPH. Glu-282 serves as a coordination point for NADPH.

This sequence belongs to the NAD-dependent glycerol-3-phosphate dehydrogenase family.

It localises to the cytoplasm. It carries out the reaction sn-glycerol 3-phosphate + NAD(+) = dihydroxyacetone phosphate + NADH + H(+). The catalysed reaction is sn-glycerol 3-phosphate + NADP(+) = dihydroxyacetone phosphate + NADPH + H(+). Its pathway is membrane lipid metabolism; glycerophospholipid metabolism. In terms of biological role, catalyzes the reduction of the glycolytic intermediate dihydroxyacetone phosphate (DHAP) to sn-glycerol 3-phosphate (G3P), the key precursor for phospholipid synthesis. The sequence is that of Glycerol-3-phosphate dehydrogenase [NAD(P)+] from Coxiella burnetii (strain CbuG_Q212) (Coxiella burnetii (strain Q212)).